A 108-amino-acid chain; its full sequence is Circadian clock oscillator protein KaiB (108 aa).

It belongs to the KaiB family. As to quaternary structure, homodimer, interacts with KaiC. The KaiABC complex composition changes during the circadian cycle to control KaiC phosphorylation. Complexes KaiC(6), KaiA(2-4):KaiC(6), KaiB(6):KaiC(6) and KaiC(6):KaiB(6):KaiA(12) are among the most important forms, many form cooperatively. Undergoes a major conformational rearrangment; in the free state forms homotetramers as a dimer of dimers. When bound to the CI domain of KaiC switches to a monomeric thioredoxin-fold (KaiB(fs)). KaiB(fs) binds CikA, leading it to dephosphorylate phospho-RpaA.

Functionally, key component of the KaiABC oscillator complex, which constitutes the main circadian regulator in cyanobacteria. Complex composition changes during the circadian cycle to control KaiC phosphorylation. KaiA stimulates KaiC autophosphorylation, while KaiB sequesters KaiA, leading to KaiC autodephosphorylation. Phospho-Ser-431 KaiC accumulation triggers binding of KaiB to form the KaiB(6):KaiC(6) complex, leading to changes in output regulators CikA and SasA. KaiB switches to a thioredoxin-like fold (KaiB(fs)) when bound to KaiC. KaiB(6):KaiC(6) formation exposes a site for KaiA binding that sequesters KaiA from KaiC, making the KaiC(6):KaiB(6):KaiA(12) complex that results in KaiC autodephosphorylation. In terms of biological role, a metamorphic protein which reversibly switches between an inactive tetrameric fold and a rare, thioredoxin-like monomeric fold (KaiB(fs)). KaiB(fs) binds phospho-KaiC, KaiA and CikA. KaiA and CikA compete for binding to KaiB(fs), and KaiB(fs) and SasA compete for binding to KaiC, thus the clock oscillator and output signal pathway are tightly coupled. This is Circadian clock oscillator protein KaiB from Nostoc sp. (strain PCC 7120 / SAG 25.82 / UTEX 2576).